A 279-amino-acid chain; its full sequence is NAD kinase (279 aa).

The Proton acceptor role is filled by D63. NAD(+) contacts are provided by residues D63–G64, R68, N133–E134, and D163.

It belongs to the NAD kinase family. A divalent metal cation serves as cofactor.

Its subcellular location is the cytoplasm. It catalyses the reaction NAD(+) + ATP = ADP + NADP(+) + H(+). Involved in the regulation of the intracellular balance of NAD and NADP, and is a key enzyme in the biosynthesis of NADP. Catalyzes specifically the phosphorylation on 2'-hydroxyl of the adenosine moiety of NAD to yield NADP. The protein is NAD kinase of Protochlamydia amoebophila (strain UWE25).